The following is a 303-amino-acid chain: Oxygen-dependent coproporphyrinogen-III oxidase (303 aa).

Position 93 (Ser93) interacts with substrate. A divalent metal cation-binding residues include His97 and His107. The Proton donor role is filled by His107. 109–111 provides a ligand contact to substrate; it reads NVR. Residues His146 and His176 each contribute to the a divalent metal cation site. The interval 241–276 is important for dimerization; sequence YVEFNLVYDRGTLFGLQSGGRTESILMSLPPQVRWG. 259 to 261 serves as a coordination point for substrate; the sequence is GGR.

This sequence belongs to the aerobic coproporphyrinogen-III oxidase family. As to quaternary structure, homodimer. The cofactor is a divalent metal cation.

The protein localises to the cytoplasm. The enzyme catalyses coproporphyrinogen III + O2 + 2 H(+) = protoporphyrinogen IX + 2 CO2 + 2 H2O. Its pathway is porphyrin-containing compound metabolism; protoporphyrin-IX biosynthesis; protoporphyrinogen-IX from coproporphyrinogen-III (O2 route): step 1/1. Its function is as follows. Involved in the heme biosynthesis. Catalyzes the aerobic oxidative decarboxylation of propionate groups of rings A and B of coproporphyrinogen-III to yield the vinyl groups in protoporphyrinogen-IX. In Pseudomonas putida (strain W619), this protein is Oxygen-dependent coproporphyrinogen-III oxidase.